Here is a 317-residue protein sequence, read N- to C-terminus: Fe-S cluster assembly protein DRE2 (317 aa).

The interval 1–131 is N-terminal SAM-like domain; the sequence is MERMLFLSPP…KPNFGAQDTV (131 aa). Positions 132 to 209 are linker; it reads PLKLGKKKKA…EEALMDEEDM (78 aa). Positions 219, 230, 233, and 235 each coordinate [2Fe-2S] cluster. Residues 219–235 form a fe-S binding site A region; it reads CRPKAGKRRRACKDCTC. 4 residues coordinate [4Fe-4S] cluster: cysteine 280, cysteine 283, cysteine 291, and cysteine 294. Short sequence motifs (cx2C motif) lie at residues 280–283 and 291–294; these read CGNC and CDGC. The segment at 280 to 294 is fe-S binding site B; the sequence is CGNCALGDAFRCDGC.

The protein belongs to the anamorsin family. As to quaternary structure, monomer. Interacts with TAH18. Interacts with MIA40. [2Fe-2S] cluster is required as a cofactor. The cofactor is [4Fe-4S] cluster.

The protein localises to the cytoplasm. It is found in the mitochondrion intermembrane space. In terms of biological role, component of the cytosolic iron-sulfur (Fe-S) protein assembly (CIA) machinery required for the maturation of extramitochondrial Fe-S proteins. Part of an electron transfer chain functioning in an early step of cytosolic Fe-S biogenesis, facilitating the de novo assembly of a [4Fe-4S] cluster on the scaffold complex CFD1-NBP35. Electrons are transferred to DRE2 from NADPH via the FAD- and FMN-containing protein TAH18. TAH18-DRE2 are also required for the assembly of the diferric tyrosyl radical cofactor of ribonucleotide reductase (RNR), probably by providing electrons for reduction during radical cofactor maturation in the catalytic small subunit RNR2. The chain is Fe-S cluster assembly protein DRE2 from Uncinocarpus reesii (strain UAMH 1704).